Here is a 132-residue protein sequence, read N- to C-terminus: Fatty acid-binding protein, adipocyte (132 aa).

Position 2 is an N-acetylcysteine (Cys-2). Position 13 is a phosphoserine (Ser-13). Phosphotyrosine; by Tyr-kinases is present on Tyr-20. Residues Lys-22–Lys-32 carry the Nuclear localization signal motif. Position 127-129 (Arg-127–Tyr-129) interacts with a fatty acid.

Belongs to the calycin superfamily. Fatty-acid binding protein (FABP) family. As to quaternary structure, monomer. Homodimer. Interacts with PPARG.

It localises to the cytoplasm. The protein localises to the nucleus. In terms of biological role, lipid transport protein in adipocytes. Binds both long chain fatty acids and retinoic acid. Delivers long-chain fatty acids and retinoic acid to their cognate receptors in the nucleus. The chain is Fatty acid-binding protein, adipocyte (FABP4) from Cervus elaphus (Red deer).